The sequence spans 199 residues: Lipid A acyltransferase PagP (199 aa).

An N-terminal signal peptide occupies residues 1–25 (MNYKDIINACILSGVFLLHSPSALA). Catalysis depends on residues H74, D117, and S118.

This sequence belongs to the lipid A palmitoyltransferase family. As to quaternary structure, homodimer.

The protein resides in the cell outer membrane. It carries out the reaction a lipid A + a 1,2-diacyl-sn-glycero-3-phosphocholine = a hepta-acyl lipid A + a 2-acyl-sn-glycero-3-phosphocholine. The catalysed reaction is a lipid IVA + a 1,2-diacyl-sn-glycero-3-phosphocholine = a lipid IVB + a 2-acyl-sn-glycero-3-phosphocholine. It catalyses the reaction a lipid IIA + a 1,2-diacyl-sn-glycero-3-phosphocholine = a lipid IIB + a 2-acyl-sn-glycero-3-phosphocholine. Functionally, transfers a fatty acid residue from the sn-1 position of a phospholipid to the N-linked hydroxyfatty acid chain on the proximal unit of lipid A or its precursors. In Yersinia pestis bv. Antiqua (strain Antiqua), this protein is Lipid A acyltransferase PagP.